The sequence spans 425 residues: Gamma-glutamyl phosphate reductase (425 aa).

It belongs to the gamma-glutamyl phosphate reductase family.

The protein resides in the cytoplasm. The enzyme catalyses L-glutamate 5-semialdehyde + phosphate + NADP(+) = L-glutamyl 5-phosphate + NADPH + H(+). Its pathway is amino-acid biosynthesis; L-proline biosynthesis; L-glutamate 5-semialdehyde from L-glutamate: step 2/2. Catalyzes the NADPH-dependent reduction of L-glutamate 5-phosphate into L-glutamate 5-semialdehyde and phosphate. The product spontaneously undergoes cyclization to form 1-pyrroline-5-carboxylate. This Opitutus terrae (strain DSM 11246 / JCM 15787 / PB90-1) protein is Gamma-glutamyl phosphate reductase.